We begin with the raw amino-acid sequence, 415 residues long: UDP-N-acetylglucosamine 1-carboxyvinyltransferase 1 (415 aa).

23 to 24 (KN) provides a ligand contact to phosphoenolpyruvate. R92 contributes to the UDP-N-acetyl-alpha-D-glucosamine binding site. C116 acts as the Proton donor in catalysis. Position 116 is a 2-(S-cysteinyl)pyruvic acid O-phosphothioketal (C116). UDP-N-acetyl-alpha-D-glucosamine contacts are provided by residues 121 to 125 (RPIDL), D304, and V326.

Belongs to the EPSP synthase family. MurA subfamily.

The protein localises to the cytoplasm. The catalysed reaction is phosphoenolpyruvate + UDP-N-acetyl-alpha-D-glucosamine = UDP-N-acetyl-3-O-(1-carboxyvinyl)-alpha-D-glucosamine + phosphate. It functions in the pathway cell wall biogenesis; peptidoglycan biosynthesis. Cell wall formation. Adds enolpyruvyl to UDP-N-acetylglucosamine. The polypeptide is UDP-N-acetylglucosamine 1-carboxyvinyltransferase 1 (Caldanaerobacter subterraneus subsp. tengcongensis (strain DSM 15242 / JCM 11007 / NBRC 100824 / MB4) (Thermoanaerobacter tengcongensis)).